Consider the following 156-residue polypeptide: Small ribosomal subunit protein uS7 (156 aa).

The protein belongs to the universal ribosomal protein uS7 family. Part of the 30S ribosomal subunit. Contacts proteins S9 and S11.

Its function is as follows. One of the primary rRNA binding proteins, it binds directly to 16S rRNA where it nucleates assembly of the head domain of the 30S subunit. Is located at the subunit interface close to the decoding center, probably blocks exit of the E-site tRNA. The chain is Small ribosomal subunit protein uS7 from Desulfitobacterium hafniense (strain DSM 10664 / DCB-2).